The sequence spans 394 residues: MAKAKFERNKPHVNVGTIGHVDHGKTTLTAAISAVLSKTYGGEVKNFAQIDNAPEERERGITINTSHIEYDTPIRHYAHVDCPGHADYVKNMITGAAQMDGAILVVAATDGPMPQTREHILLSRQVGVPFIIVFMNKCDMVDDEELLELVEMEVRELLSEYDFPGDDLPVIQGSALKALEGQPEWEAKILELAEALDTYIPEPARDIDKPFLLPIEDVFSISGRGTVVTGRVERGIVRVSDEVEIVGVRPTTKTTCTGVEMFRKLLDEGRAGENCGVLLRGTKRDDVERGQVLAKPGSINPHTTFESEVYVLSKEEGGRHTPFFKGYRPQFFFRTTDVTGTIELPEGVEMVMPGDNIKMVVTLIYPIAMDDGLRFAIREGGRTVGAGVVAKIIA.

In terms of domain architecture, tr-type G spans 10–204; sequence KPHVNVGTIG…ALDTYIPEPA (195 aa). Positions 19-26 are G1; the sequence is GHVDHGKT. Residue 19–26 coordinates GTP; sequence GHVDHGKT. Mg(2+) is bound at residue Thr-26. The interval 60 to 64 is G2; sequence GITIN. Residues 81–84 are G3; the sequence is DCPG. Residues 81-85 and 136-139 contribute to the GTP site; these read DCPGH and NKCD. The interval 136–139 is G4; it reads NKCD. The interval 174–176 is G5; it reads SAL.

The protein belongs to the TRAFAC class translation factor GTPase superfamily. Classic translation factor GTPase family. EF-Tu/EF-1A subfamily. In terms of assembly, monomer.

The protein localises to the cytoplasm. It catalyses the reaction GTP + H2O = GDP + phosphate + H(+). GTP hydrolase that promotes the GTP-dependent binding of aminoacyl-tRNA to the A-site of ribosomes during protein biosynthesis. This Shewanella frigidimarina (strain NCIMB 400) protein is Elongation factor Tu 1.